The following is a 910-amino-acid chain: DNA mismatch repair protein MutS (910 aa).

607 to 614 contacts ATP; that stretch reads GPNMAGKS.

Belongs to the DNA mismatch repair MutS family.

In terms of biological role, this protein is involved in the repair of mismatches in DNA. It is possible that it carries out the mismatch recognition step. This protein has a weak ATPase activity. This chain is DNA mismatch repair protein MutS, found in Geobacillus thermodenitrificans (strain NG80-2).